We begin with the raw amino-acid sequence, 146 residues long: Hemoglobin subunit beta (146 aa).

Positions 2 to 146 constitute a Globin domain; that stretch reads HWSAEEKQLI…VAHALARKYH (145 aa). Heme b-binding residues include H63 and H92.

The protein belongs to the globin family. Heterotetramer of two alpha chains and two beta chains. In terms of tissue distribution, red blood cells.

Involved in oxygen transport from the lung to the various peripheral tissues. The chain is Hemoglobin subunit beta (HBB) from Streptopelia orientalis (Eastern turtle dove).